Reading from the N-terminus, the 244-residue chain is 1-(5-phosphoribosyl)-5-[(5-phosphoribosylamino)methylideneamino] imidazole-4-carboxamide isomerase (244 aa).

Asp10 (proton acceptor) is an active-site residue. Asp129 serves as the catalytic Proton donor.

This sequence belongs to the HisA/HisF family.

It is found in the cytoplasm. It carries out the reaction 1-(5-phospho-beta-D-ribosyl)-5-[(5-phospho-beta-D-ribosylamino)methylideneamino]imidazole-4-carboxamide = 5-[(5-phospho-1-deoxy-D-ribulos-1-ylimino)methylamino]-1-(5-phospho-beta-D-ribosyl)imidazole-4-carboxamide. It participates in amino-acid biosynthesis; L-histidine biosynthesis; L-histidine from 5-phospho-alpha-D-ribose 1-diphosphate: step 4/9. The sequence is that of 1-(5-phosphoribosyl)-5-[(5-phosphoribosylamino)methylideneamino] imidazole-4-carboxamide isomerase from Rhodococcus jostii (strain RHA1).